The sequence spans 1761 residues: Nonribosomal peptide synthetase 6 (1761 aa).

The tract at residues 63 to 468 (ERAALHPEKI…GRQDQQVKLR (406 aa)) is adenylation. Residues 600–675 (EATTEMELKL…AMAEKAKPVS (76 aa)) enclose the Carrier 1 domain. Ser636 carries the O-(pantetheine 4'-phosphoryl)serine modification. The segment at 712-1135 (VEDVYPCTPL…AVLDPAEARD (424 aa)) is condensation 1. Carrier domains are found at residues 1169–1242 (SPNE…SNER) and 1237–1313 (SASN…EEEM). An O-(pantetheine 4'-phosphoryl)serine mark is found at Ser1203 and Ser1274. The tract at residues 1354–1677 (IYPTRPLQQL…DKVQWFDTVV (324 aa)) is condensation 2.

It belongs to the NRP synthetase family.

Its pathway is siderophore biosynthesis. NRPS involved in extracellular coprogen-type siderophores biosynthesis including coprogen, neocoprogen I and neocoprogen II. The role of extracellular siderophores in fungal virulence to plants is to supply iron to the fungus during plant infection, but not to act as phytotoxins, depriving their hosts of iron. This Cochliobolus miyabeanus (Brown spot disease fungus) protein is Nonribosomal peptide synthetase 6.